The primary structure comprises 184 residues: MILEATARRVHIIQGEYKVIGDPEVVLATILGSCVAACLRDPVAGVGGMNHFLLPGMASSPTSGGDATRYGVHLMELLINGLLKQGARRDRLEAKVFGGAKTIATFSNVGEQNAAFAMQFLRDEGIPVVSSSTGGEHGRKVEYWPVSGRARQYPLTGAETQKTVALEQRPVAAPKPVDNAIEFF.

It belongs to the CheD family.

The catalysed reaction is L-glutaminyl-[protein] + H2O = L-glutamyl-[protein] + NH4(+). Its function is as follows. Probably deamidates glutamine residues to glutamate on methyl-accepting chemotaxis receptors (MCPs), playing an important role in chemotaxis. The polypeptide is Probable chemoreceptor glutamine deamidase CheD (Rhizobium rhizogenes (strain K84 / ATCC BAA-868) (Agrobacterium radiobacter)).